The chain runs to 238 residues: Large ribosomal subunit protein uL2 (238 aa).

The tract at residues 199–238 (PHGGGLHQSVSRSSTVARNTPPGRKVGHIAARRTGRRDRK) is disordered. The segment covering 206 to 216 (QSVSRSSTVAR) has biased composition (polar residues). Residues 223 to 238 (KVGHIAARRTGRRDRK) show a composition bias toward basic residues.

This sequence belongs to the universal ribosomal protein uL2 family. As to quaternary structure, part of the 50S ribosomal subunit. Forms a bridge to the 30S subunit in the 70S ribosome.

In terms of biological role, one of the primary rRNA binding proteins. Required for association of the 30S and 50S subunits to form the 70S ribosome, for tRNA binding and peptide bond formation. It has been suggested to have peptidyltransferase activity; this is somewhat controversial. Makes several contacts with the 16S rRNA in the 70S ribosome. In Metallosphaera sedula (strain ATCC 51363 / DSM 5348 / JCM 9185 / NBRC 15509 / TH2), this protein is Large ribosomal subunit protein uL2.